The sequence spans 596 residues: Selenocysteine-specific elongation factor (596 aa).

A tr-type G domain is found at 5–217 (RVNVNVGVLG…LLTSQISIPT (213 aa)). The interval 14–21 (GHIDSGKT) is G1. Residues G19, T21, and A22 each contribute to the GDP site. GTP contacts are provided by G19, T21, and A22. Position 21 (T21) interacts with Mg(2+). Residues 46–50 (GITLD) are G2. Residues T48 and D92 each contribute to the Mg(2+) site. A G3 region spans residues 92-95 (DCPG). Positions 146–149 (NKID) are G4. GDP contacts are provided by D149 and K187. Residues D149 and K187 each coordinate GTP. The tract at residues 185-187 (AAK) is G5. S537 bears the Phosphoserine mark. The residue at position 545 (T545) is a Phosphothreonine. A Nuclear localization signal motif is present at residues 547–553 (ALKKRAR). Positions 548–573 (LKKRARAGRGEATRQEESAERSEPSQ) are disordered. The span at 555–571 (GRGEATRQEESAERSEP) shows a compositional bias: basic and acidic residues. Position 556 is an omega-N-methylarginine (R556).

It belongs to the TRAFAC class translation factor GTPase superfamily. Classic translation factor GTPase family. SelB subfamily. Mg(2+) is required as a cofactor. It depends on Mn(2+) as a cofactor.

The protein localises to the cytoplasm. It localises to the nucleus. The enzyme catalyses GTP + H2O = GDP + phosphate + H(+). Translation factor required for the incorporation of the rare amino acid selenocysteine encoded by UGA codons. Replaces the eRF1-eRF3-GTP ternary complex for the insertion of selenocysteine directed by the UGA codon. Insertion of selenocysteine at UGA codons is mediated by SECISBP2 and EEFSEC: SECISBP2 (1) specifically binds the SECIS sequence once the 80S ribosome encounters an in-frame UGA codon and (2) contacts the RPS27A/eS31 of the 40S ribosome before ribosome stalling. (3) GTP-bound EEFSEC then delivers selenocysteinyl-tRNA(Sec) to the 80S ribosome and adopts a preaccommodated state conformation. (4) After GTP hydrolysis, EEFSEC dissociates from the assembly, selenocysteinyl-tRNA(Sec) accommodates, and peptide bond synthesis and selenoprotein elongation occur. In Homo sapiens (Human), this protein is Selenocysteine-specific elongation factor.